A 222-amino-acid chain; its full sequence is MGEASRDEYKIQSFDAETQQLLKTALKDPGAVDLERVANVIVDHSLQDCVFSKEAGRMCYAIIQAESKQAGQSVFRRGLLNRLQKEYDAREQLRACSLQGWVCYVTFICNIFDYLRVNNMPMMALVNPVYDCLFQLAQPESLSREEEVDCLVLQLHRVGEQLEKMNGQRMDELFILIRDGFLLPIDLSSLARLLLLEIIEFRAAGWKTTPAAHKYYYSEVSD.

Positions 3–205 (EASRDEYKIQ…LEIIEFRAAG (203 aa)) constitute an MIF4G domain.

Belongs to the MIF4GD family. As to quaternary structure, interacts with EIF4G1, EIF4G2 and SLBP; probably tethered by SLBP to the 3'-end of mRNAs ending with the histone stem-loop, it also interacts with EIF4G1 which is bound to their 5'-end.

It is found in the cytoplasm. The protein resides in the nucleus. In terms of biological role, functions in replication-dependent translation of histone mRNAs which differ from other eukaryotic mRNAs in that they do not end with a poly-A tail but a stem-loop. May participate in circularizing those mRNAs specifically enhancing their translation. The sequence is that of MIF4G domain-containing protein (Mif4gd) from Rattus norvegicus (Rat).